Reading from the N-terminus, the 815-residue chain is Probable bifunctional folylpolyglutamate synthase/dihydropteroate synthase (815 aa).

A folylpolyglutamate synthase region spans residues 1–416 (MRYDEAANFL…LVAGSLFAVA (416 aa)). 47–53 (GSNGKGS) contributes to the ATP binding site. The region spanning 553–803 (TAVMGILNVT…DVPENVAAVR (251 aa)) is the Pterin-binding domain. Residues 555–815 (VMGILNVTPD…EATRTGADAE (261 aa)) are DHPS. N560 provides a ligand contact to Mg(2+). (7,8-dihydropterin-6-yl)methyl diphosphate is bound by residues T600, D633, N652, D722, K758, and 791 to 793 (RVH).

The protein in the N-terminal section; belongs to the folylpolyglutamate synthase family. It in the C-terminal section; belongs to the DHPS family. It depends on Mg(2+) as a cofactor.

The enzyme catalyses (6S)-5,6,7,8-tetrahydrofolyl-(gamma-L-Glu)(n) + L-glutamate + ATP = (6S)-5,6,7,8-tetrahydrofolyl-(gamma-L-Glu)(n+1) + ADP + phosphate + H(+). It carries out the reaction (7,8-dihydropterin-6-yl)methyl diphosphate + 4-aminobenzoate = 7,8-dihydropteroate + diphosphate. The protein operates within cofactor biosynthesis; tetrahydrofolylpolyglutamate biosynthesis. Its pathway is cofactor biosynthesis; tetrahydrofolate biosynthesis; 7,8-dihydrofolate from 2-amino-4-hydroxy-6-hydroxymethyl-7,8-dihydropteridine diphosphate and 4-aminobenzoate: step 1/2. Can complement an H.volcanii mutant strain that is thymidine auxotroph because it lacks the two dihydrofolate reductase genes encoded by hdrA and hdrB. This is Probable bifunctional folylpolyglutamate synthase/dihydropteroate synthase (folP) from Halobacterium salinarum (strain ATCC 700922 / JCM 11081 / NRC-1) (Halobacterium halobium).